Consider the following 221-residue polypeptide: Epididymal secretory glutathione peroxidase (221 aa).

The N-terminal stretch at 1–21 (MTTQLRVVHLLPLLLACFVQT) is a signal peptide. C73 is an active-site residue.

The protein belongs to the glutathione peroxidase family. As to expression, epididymis.

The protein localises to the secreted. It catalyses the reaction 2 glutathione + H2O2 = glutathione disulfide + 2 H2O. In terms of biological role, protects cells and enzymes from oxidative damage, by catalyzing the reduction of hydrogen peroxide, lipid peroxides and organic hydroperoxide, by glutathione. May constitute a glutathione peroxidase-like protective system against peroxide damage in sperm membrane lipids. The polypeptide is Epididymal secretory glutathione peroxidase (GPX5) (Macaca fascicularis (Crab-eating macaque)).